The following is a 505-amino-acid chain: Histidine ammonia-lyase (505 aa).

The 5-imidazolinone (Ala-Gly) cross-link spans 141–143 (ASG). The residue at position 142 (Ser142) is a 2,3-didehydroalanine (Ser).

Belongs to the PAL/histidase family. Contains an active site 4-methylidene-imidazol-5-one (MIO), which is formed autocatalytically by cyclization and dehydration of residues Ala-Ser-Gly.

It localises to the cytoplasm. The catalysed reaction is L-histidine = trans-urocanate + NH4(+). Its pathway is amino-acid degradation; L-histidine degradation into L-glutamate; N-formimidoyl-L-glutamate from L-histidine: step 1/3. This is Histidine ammonia-lyase from Bacillus cereus (strain G9842).